The primary structure comprises 129 residues: Phosphoribosyl-AMP cyclohydrolase (129 aa).

Mg(2+) is bound at residue Asp-94. Cys-95 provides a ligand contact to Zn(2+). Mg(2+) contacts are provided by Asp-96 and Asp-98. The Zn(2+) site is built by Cys-111 and Cys-118.

Belongs to the PRA-CH family. Homodimer. Mg(2+) is required as a cofactor. The cofactor is Zn(2+).

The protein resides in the cytoplasm. It catalyses the reaction 1-(5-phospho-beta-D-ribosyl)-5'-AMP + H2O = 1-(5-phospho-beta-D-ribosyl)-5-[(5-phospho-beta-D-ribosylamino)methylideneamino]imidazole-4-carboxamide. The protein operates within amino-acid biosynthesis; L-histidine biosynthesis; L-histidine from 5-phospho-alpha-D-ribose 1-diphosphate: step 3/9. Its function is as follows. Catalyzes the hydrolysis of the adenine ring of phosphoribosyl-AMP. In Corynebacterium efficiens (strain DSM 44549 / YS-314 / AJ 12310 / JCM 11189 / NBRC 100395), this protein is Phosphoribosyl-AMP cyclohydrolase.